A 97-amino-acid polypeptide reads, in one-letter code: Small cell adhesion glycoprotein (97 aa).

The Extracellular portion of the chain corresponds to 1-36 (MTSFPTTPPPAEELMATTILQATEALSPEAEASTAL). An O-linked (GalNAc...) threonine glycan is attached at Thr2. Residue Ser3 is glycosylated (O-linked (GalNAc...) serine). O-linked (GalNAc...) threonine glycans are attached at residues Thr6, Thr7, Thr17, Thr18, and Thr23. The chain crosses the membrane as a helical; Signal-anchor for type III membrane protein span at residues 37 to 57 (IAVVITVVFLTLLSVVILIFF). The Cytoplasmic segment spans residues 58–97 (YLYKNKGSYVTYEPADGEPGAVVLMENDSAKGREKEEYFI).

This sequence belongs to the SMAGP family. O-glycosylated. The O-glycan is modified with sialic acid residues.

Its subcellular location is the cell membrane. The protein localises to the cytoplasmic vesicle membrane. Functionally, may play a role in epithelial cell-cell contacts. May play a role in tumor invasiveness and metastasis formation. The polypeptide is Small cell adhesion glycoprotein (SMAGP) (Bos taurus (Bovine)).